The chain runs to 541 residues: Anthranilate synthase component 1 (541 aa).

L-tryptophan contacts are provided by residues Ser-61 and Pro-311–Met-313. Chorismate is bound at residue Gly-348–Thr-349. Glu-381 serves as a coordination point for Mg(2+). Chorismate is bound by residues Tyr-469, Arg-489, Gly-503–Gly-505, and Gly-505. Glu-518 lines the Mg(2+) pocket.

This sequence belongs to the anthranilate synthase component I family. As to quaternary structure, heterotetramer consisting of two non-identical subunits: a beta subunit (TrpG) and a large alpha subunit (TrpE). Requires Mg(2+) as cofactor.

The enzyme catalyses chorismate + L-glutamine = anthranilate + pyruvate + L-glutamate + H(+). Its pathway is amino-acid biosynthesis; L-tryptophan biosynthesis; L-tryptophan from chorismate: step 1/5. Feedback inhibited by tryptophan. Functionally, part of a heterotetrameric complex that catalyzes the two-step biosynthesis of anthranilate, an intermediate in the biosynthesis of L-tryptophan. In the first step, the glutamine-binding beta subunit (TrpG) of anthranilate synthase (AS) provides the glutamine amidotransferase activity which generates ammonia as a substrate that, along with chorismate, is used in the second step, catalyzed by the large alpha subunit of AS (TrpE) to produce anthranilate. In the absence of TrpG, TrpE can synthesize anthranilate directly from chorismate and high concentrations of ammonia. This chain is Anthranilate synthase component 1 (trpE), found in Vibrio parahaemolyticus serotype O3:K6 (strain RIMD 2210633).